We begin with the raw amino-acid sequence, 386 residues long: Succinate--CoA ligase [ADP-forming] subunit beta (386 aa).

One can recognise an ATP-grasp domain in the interval 9-244 (KEILRSFGVP…LDEEDPAEVE (236 aa)). Residues K46, 53 to 55 (GRG), E99, A102, and E107 contribute to the ATP site. Positions 199 and 213 each coordinate Mg(2+). Residues N264 and 321–323 (GIM) contribute to the substrate site.

This sequence belongs to the succinate/malate CoA ligase beta subunit family. As to quaternary structure, heterotetramer of two alpha and two beta subunits. Mg(2+) is required as a cofactor.

It carries out the reaction succinate + ATP + CoA = succinyl-CoA + ADP + phosphate. The catalysed reaction is GTP + succinate + CoA = succinyl-CoA + GDP + phosphate. Its pathway is carbohydrate metabolism; tricarboxylic acid cycle; succinate from succinyl-CoA (ligase route): step 1/1. In terms of biological role, succinyl-CoA synthetase functions in the citric acid cycle (TCA), coupling the hydrolysis of succinyl-CoA to the synthesis of either ATP or GTP and thus represents the only step of substrate-level phosphorylation in the TCA. The beta subunit provides nucleotide specificity of the enzyme and binds the substrate succinate, while the binding sites for coenzyme A and phosphate are found in the alpha subunit. In Acidovorax ebreus (strain TPSY) (Diaphorobacter sp. (strain TPSY)), this protein is Succinate--CoA ligase [ADP-forming] subunit beta.